The chain runs to 377 residues: Anhydro-N-acetylmuramic acid kinase (377 aa).

An ATP-binding site is contributed by 12 to 19 (GTSLDGID).

The protein belongs to the anhydro-N-acetylmuramic acid kinase family.

The catalysed reaction is 1,6-anhydro-N-acetyl-beta-muramate + ATP + H2O = N-acetyl-D-muramate 6-phosphate + ADP + H(+). The protein operates within amino-sugar metabolism; 1,6-anhydro-N-acetylmuramate degradation. It functions in the pathway cell wall biogenesis; peptidoglycan recycling. Catalyzes the specific phosphorylation of 1,6-anhydro-N-acetylmuramic acid (anhMurNAc) with the simultaneous cleavage of the 1,6-anhydro ring, generating MurNAc-6-P. Is required for the utilization of anhMurNAc either imported from the medium or derived from its own cell wall murein, and thus plays a role in cell wall recycling. This chain is Anhydro-N-acetylmuramic acid kinase, found in Methylorubrum extorquens (strain CM4 / NCIMB 13688) (Methylobacterium extorquens).